A 588-amino-acid polypeptide reads, in one-letter code: Snake venom 5'-nucleotidase (588 aa).

The N-terminal stretch at 1–40 (MQTPKRRRGAQGCPRSSPSPPLLLLVGAVWFCAALSVAAG) is a signal peptide. Zn(2+)-binding residues include Asp-51 and His-53. An intrachain disulfide couples Cys-66 to Cys-71. N-linked (GlcNAc...) asparagine glycosylation is present at Asn-88. Zn(2+) is bound by residues Asp-99 and Asn-131. The N-linked (GlcNAc...) asparagine glycan is linked to Asn-167. Zn(2+)-binding residues include His-234 and His-257. 3 N-linked (GlcNAc...) asparagine glycosylation sites follow: Asn-327, Asn-347, and Asn-361. 2 disulfides stabilise this stretch: Cys-367–Cys-372 and Cys-379–Cys-401. An AMP-binding site is contributed by Arg-368. AMP-binding residues include Asn-404 and Arg-409. Residue Asn-418 is glycosylated (N-linked (GlcNAc...) asparagine). Phe-432 contributes to the AMP binding site. Residues Cys-491 and Cys-494 are joined by a disulfide bond. The AMP site is built by Phe-515 and Asp-521. N-linked (GlcNAc...) asparagine glycosylation occurs at Asn-532. Ser-564 is lipidated: GPI-anchor amidated serine. Residues 565-588 (AGTLFQAQLFLTWGLCISLLYFIL) constitute a propeptide, removed in mature form.

It belongs to the 5'-nucleotidase family. It depends on Zn(2+) as a cofactor. Venom 5'-nucleotidases (or a part thereof) may be released into the venom via exosome-like vesicles. They may be attached via a GPI anchor to the membrane of these vesicles. Soluble forms of 5'-nucleotidase might be released by cleavage of the ectodomain in the exosome-like vesicles or venom gland cells. Expressed by the venom gland.

The protein localises to the membrane. It catalyses the reaction a ribonucleoside 5'-phosphate + H2O = a ribonucleoside + phosphate. Functionally, hydrolyzes nucleotides into nucleosides. Snake venom 5'-nucleotidases are widely distributed among venomous snake taxa, but there is a lack of information about their biological activities. They have been shown to inhibit platelet aggregation. This effect may be due to the liberation of inhibitory AMP or adenosine by its action on ADP released upon initiation of aggregation. Venom 5'-nucleotidases are also known to synergistically act in vivo with other toxins like ADPases, phospholipases, and disintegrins to exert a more pronounced anti-coagulant effect. The polypeptide is Snake venom 5'-nucleotidase (Gloydius brevicauda (Korean slamosa snake)).